The following is a 111-amino-acid chain: MNRKYYFNNMWWGWVTGGYMLYMSWDYEFKYRLLFWCISLCGMVLYPVAKWYIEDTALKFTRPDFWNSGFFADTPGKMGLLAVYTGTVFILSLPLSMIYILSVIIKRLSVR.

Transmembrane regions (helical) follow at residues 33-53 and 85-105; these read LLFWCISLCGMVLYPVAKWYI and TGTVFILSLPLSMIYILSVII.

It is found in the cell membrane. This protein is able to protect a cell, which harbors the plasmid ColIa-CA53 encoding colicin Ia, against colicin Ia. The polypeptide is Colicin-Ia immunity protein (Escherichia coli).